The primary structure comprises 225 residues: Doublesex- and mab-3-related transcription factor C1 (225 aa).

Basic and acidic residues predominate over residues 1–12 (MQRPSGSREVRK). Disordered stretches follow at residues 1–49 (MQRP…SHVH) and 179–216 (QTRHQPCGMPGTAGERGLQLPNPSMPPRPASSGSLPSG). Positions 27–37 (RVKKHVVRRQK) are enriched in basic residues.

This sequence belongs to the DMRT family.

This Rattus norvegicus (Rat) protein is Doublesex- and mab-3-related transcription factor C1 (Dmrtc1).